We begin with the raw amino-acid sequence, 340 residues long: Phosphoribosylformylglycinamidine cyclo-ligase (340 aa).

The protein belongs to the AIR synthase family.

The protein localises to the cytoplasm. It carries out the reaction 2-formamido-N(1)-(5-O-phospho-beta-D-ribosyl)acetamidine + ATP = 5-amino-1-(5-phospho-beta-D-ribosyl)imidazole + ADP + phosphate + H(+). It participates in purine metabolism; IMP biosynthesis via de novo pathway; 5-amino-1-(5-phospho-D-ribosyl)imidazole from N(2)-formyl-N(1)-(5-phospho-D-ribosyl)glycinamide: step 2/2. The sequence is that of Phosphoribosylformylglycinamidine cyclo-ligase from Streptococcus pyogenes serotype M3 (strain ATCC BAA-595 / MGAS315).